The primary structure comprises 179 residues: Large ribosomal subunit protein uL5 (179 aa).

It belongs to the universal ribosomal protein uL5 family. Part of the 50S ribosomal subunit; part of the 5S rRNA/L5/L18/L25 subcomplex. Contacts the 5S rRNA and the P site tRNA. Forms a bridge to the 30S subunit in the 70S ribosome.

Its function is as follows. This is one of the proteins that bind and probably mediate the attachment of the 5S RNA into the large ribosomal subunit, where it forms part of the central protuberance. In the 70S ribosome it contacts protein S13 of the 30S subunit (bridge B1b), connecting the 2 subunits; this bridge is implicated in subunit movement. Contacts the P site tRNA; the 5S rRNA and some of its associated proteins might help stabilize positioning of ribosome-bound tRNAs. The sequence is that of Large ribosomal subunit protein uL5 from Natranaerobius thermophilus (strain ATCC BAA-1301 / DSM 18059 / JW/NM-WN-LF).